A 388-amino-acid polypeptide reads, in one-letter code: FMRFamide neuropeptides (388 aa).

Positions 1–21 (MVAPLLVFLFSLQLCHTTSWA) are cleaved as a signal peptide. The propeptide occupies 22–172 (YVGGNSLNSN…SNHQVIRDSR (151 aa)). Residues 40–74 (FPAGTSNEVPEDAANGQDDNDDSQLTEPNDNNAPL) form a disordered region. Residues 64-74 (LTEPNDNNAPL) show a composition bias toward polar residues. Phenylalanine 179, phenylalanine 196, phenylalanine 208, phenylalanine 219, phenylalanine 230, phenylalanine 241, phenylalanine 253, phenylalanine 265, phenylalanine 277, phenylalanine 289, phenylalanine 301, phenylalanine 313, phenylalanine 325, phenylalanine 337, phenylalanine 346, phenylalanine 359, and phenylalanine 372 each carry phenylalanine amide. Residues 360–388 (GRTPTQSSDFMRFGKSLDKSENKTSDLQK) form a disordered region. Residues 374 to 388 (KSLDKSENKTSDLQK) are compositionally biased toward basic and acidic residues. The propeptide occupies 375 to 388 (SLDKSENKTSDLQK).

This sequence belongs to the FARP (FMRFamide related peptide) family. In the brain, expressed in 2 large cells in the lateral neurons in each optic lobe, 2 slightly bigger cells on both sides of the tritocerebrum, around 14 small cells in the dorsal area, around 13 cells in the subesophageal ganglion, and in the central brain.

It localises to the secreted. In Musca domestica (House fly), this protein is FMRFamide neuropeptides.